A 472-amino-acid polypeptide reads, in one-letter code: Chromosomal replication initiator protein DnaA (472 aa).

Positions 1–73 (MSNMEHDRWS…LTCWQAELPE (73 aa)) are domain I, interacts with DnaA modulators. The interval 73–128 (EVCRIDLTVRSPMRAAVAKEAAAPVEHRRAEHRPATETRSHATVPASSNHDALGGS) is domain II. The disordered stretch occupies residues 92-127 (EAAAPVEHRRAEHRPATETRSHATVPASSNHDALGG). A compositionally biased stretch (basic and acidic residues) spans 97–112 (VEHRRAEHRPATETRS). A domain III, AAA+ region region spans residues 129 to 351 (PLDPRLTFAS…GAINRLLAHS (223 aa)). The ATP site is built by glycine 176, glycine 178, lysine 179, and threonine 180. Residues 352-472 (KLNAQPVTLE…VDSLKRQLQE (121 aa)) form a domain IV, binds dsDNA region.

It belongs to the DnaA family. As to quaternary structure, oligomerizes as a right-handed, spiral filament on DNA at oriC.

Its subcellular location is the cytoplasm. In terms of biological role, plays an essential role in the initiation and regulation of chromosomal replication. ATP-DnaA binds to the origin of replication (oriC) to initiate formation of the DNA replication initiation complex once per cell cycle. Binds the DnaA box (a 9 base pair repeat at the origin) and separates the double-stranded (ds)DNA. Forms a right-handed helical filament on oriC DNA; dsDNA binds to the exterior of the filament while single-stranded (ss)DNA is stabiized in the filament's interior. The ATP-DnaA-oriC complex binds and stabilizes one strand of the AT-rich DNA unwinding element (DUE), permitting loading of DNA polymerase. After initiation quickly degrades to an ADP-DnaA complex that is not apt for DNA replication. Binds acidic phospholipids. The sequence is that of Chromosomal replication initiator protein DnaA from Rhodopseudomonas palustris (strain HaA2).